The primary structure comprises 465 residues: Cysteine--tRNA ligase (465 aa).

Cys-27 is a Zn(2+) binding site. Positions 29–39 (PTVYNYIHIGN) match the 'HIGH' region motif. Positions 207, 232, and 236 each coordinate Zn(2+). The 'KMSKS' region motif lies at 264-268 (KMSKS). Lys-267 is an ATP binding site.

Belongs to the class-I aminoacyl-tRNA synthetase family. Monomer. The cofactor is Zn(2+).

The protein localises to the cytoplasm. The catalysed reaction is tRNA(Cys) + L-cysteine + ATP = L-cysteinyl-tRNA(Cys) + AMP + diphosphate. This chain is Cysteine--tRNA ligase, found in Clostridioides difficile (strain 630) (Peptoclostridium difficile).